We begin with the raw amino-acid sequence, 598 residues long: uncharacterized protein (598 aa).

In terms of domain architecture, ABC transmembrane type-1 spans 39-322 (LIMVFVFVTV…LSNQFNMIQM (284 aa)). 5 helical membrane passes run 40–60 (IMVF…PYLI), 80–100 (MLIL…QGKI), 150–170 (VLGN…GAVI), 177–197 (VILS…TQIV), and 273–293 (LGFA…IITV). Positions 355–589 (IEFKNVWFSY…RGFYYELFTS (235 aa)) constitute an ABC transporter domain. 388-395 (GPTGSGKT) lines the ATP pocket.

It belongs to the ABC transporter superfamily.

Its subcellular location is the cell membrane. This is an uncharacterized protein from Thermotoga maritima (strain ATCC 43589 / DSM 3109 / JCM 10099 / NBRC 100826 / MSB8).